The following is a 115-amino-acid chain: Androgen-binding protein homolog (115 aa).

The N-terminal stretch at 1–23 (MKGTLLLLALLVTGELGFQTTEA) is a signal peptide.

It belongs to the secretoglobin family.

It localises to the secreted. The protein is Androgen-binding protein homolog of Mesocricetus auratus (Golden hamster).